A 442-amino-acid chain; its full sequence is Magnesium transporter MRS2-1 (442 aa).

A disordered region spans residues 1–30 (MSELKERLLPPRPASAMNLRDASVTRPSAS). 2 helical membrane passes run 378–398 (LLLT…GIFG) and 414–434 (WVLI…VWFF). Positions 398 to 400 (GMN) match the Required for magnesium transport activity motif.

It belongs to the CorA metal ion transporter (MIT) (TC 1.A.35.5) family. Expressed in the whole plant except stems.

It localises to the membrane. In terms of biological role, magnesium transporter that may mediate the influx of magnesium. The polypeptide is Magnesium transporter MRS2-1 (MRS2-1) (Arabidopsis thaliana (Mouse-ear cress)).